Consider the following 227-residue polypeptide: Cytochrome c oxidase subunit 2 (227 aa).

The Mitochondrial intermembrane segment spans residues 1 to 14 (MACPVQLGFQDAAS). A helical transmembrane segment spans residues 15–45 (PIMEELTYFHDHTLMIVFLISSLVLYIISLM). Residues 46–59 (LTTELTHTSTMDAQ) are Mitochondrial matrix-facing. The helical transmembrane segment at 60 to 87 (EVETVWTILPAVILILIALPSLRILYMM) threads the bilayer. The Mitochondrial intermembrane segment spans residues 88 to 227 (DEITTPSLTL…HFEEWLLAML (140 aa)). 6 residues coordinate Cu cation: H161, C196, E198, C200, H204, and M207. A Mg(2+)-binding site is contributed by E198.

Belongs to the cytochrome c oxidase subunit 2 family. Component of the cytochrome c oxidase (complex IV, CIV), a multisubunit enzyme composed of 14 subunits. The complex is composed of a catalytic core of 3 subunits MT-CO1, MT-CO2 and MT-CO3, encoded in the mitochondrial DNA, and 11 supernumerary subunits COX4I, COX5A, COX5B, COX6A, COX6B, COX6C, COX7A, COX7B, COX7C, COX8 and NDUFA4, which are encoded in the nuclear genome. The complex exists as a monomer or a dimer and forms supercomplexes (SCs) in the inner mitochondrial membrane with NADH-ubiquinone oxidoreductase (complex I, CI) and ubiquinol-cytochrome c oxidoreductase (cytochrome b-c1 complex, complex III, CIII), resulting in different assemblies (supercomplex SCI(1)III(2)IV(1) and megacomplex MCI(2)III(2)IV(2)). Found in a complex with TMEM177, COA6, COX18, COX20, SCO1 and SCO2. Interacts with TMEM177 in a COX20-dependent manner. Interacts with COX20. Interacts with COX16. The cofactor is Cu cation.

The protein localises to the mitochondrion inner membrane. It carries out the reaction 4 Fe(II)-[cytochrome c] + O2 + 8 H(+)(in) = 4 Fe(III)-[cytochrome c] + 2 H2O + 4 H(+)(out). In terms of biological role, component of the cytochrome c oxidase, the last enzyme in the mitochondrial electron transport chain which drives oxidative phosphorylation. The respiratory chain contains 3 multisubunit complexes succinate dehydrogenase (complex II, CII), ubiquinol-cytochrome c oxidoreductase (cytochrome b-c1 complex, complex III, CIII) and cytochrome c oxidase (complex IV, CIV), that cooperate to transfer electrons derived from NADH and succinate to molecular oxygen, creating an electrochemical gradient over the inner membrane that drives transmembrane transport and the ATP synthase. Cytochrome c oxidase is the component of the respiratory chain that catalyzes the reduction of oxygen to water. Electrons originating from reduced cytochrome c in the intermembrane space (IMS) are transferred via the dinuclear copper A center (CU(A)) of subunit 2 and heme A of subunit 1 to the active site in subunit 1, a binuclear center (BNC) formed by heme A3 and copper B (CU(B)). The BNC reduces molecular oxygen to 2 water molecules using 4 electrons from cytochrome c in the IMS and 4 protons from the mitochondrial matrix. The chain is Cytochrome c oxidase subunit 2 (MT-CO2) from Cheirogaleus medius (Fat-tailed dwarf lemur).